Consider the following 79-residue polypeptide: uncharacterized protein (79 aa).

2 helical membrane passes run 18–38 (IWII…IVLI) and 50–70 (GITF…FFLF).

Its subcellular location is the host membrane. This is an uncharacterized protein from Spiroplasma virus SpV1-R8A2 B (SpV1).